A 230-amino-acid chain; its full sequence is 7-cyano-7-deazaguanine synthase (230 aa).

Leu-8 to Thr-18 is an ATP binding site. The Zn(2+) site is built by Cys-186, Cys-196, Cys-199, and Cys-202.

It belongs to the QueC family. Zn(2+) is required as a cofactor.

It carries out the reaction 7-carboxy-7-deazaguanine + NH4(+) + ATP = 7-cyano-7-deazaguanine + ADP + phosphate + H2O + H(+). The protein operates within purine metabolism; 7-cyano-7-deazaguanine biosynthesis. Catalyzes the ATP-dependent conversion of 7-carboxy-7-deazaguanine (CDG) to 7-cyano-7-deazaguanine (preQ(0)). The polypeptide is 7-cyano-7-deazaguanine synthase (Xylella fastidiosa (strain 9a5c)).